We begin with the raw amino-acid sequence, 291 residues long: Bifunctional protein FolD (291 aa).

NADP(+) is bound by residues 167–169, S192, and I233; that span reads GRS.

The protein belongs to the tetrahydrofolate dehydrogenase/cyclohydrolase family. In terms of assembly, homodimer.

The catalysed reaction is (6R)-5,10-methylene-5,6,7,8-tetrahydrofolate + NADP(+) = (6R)-5,10-methenyltetrahydrofolate + NADPH. It catalyses the reaction (6R)-5,10-methenyltetrahydrofolate + H2O = (6R)-10-formyltetrahydrofolate + H(+). The protein operates within one-carbon metabolism; tetrahydrofolate interconversion. Its function is as follows. Catalyzes the oxidation of 5,10-methylenetetrahydrofolate to 5,10-methenyltetrahydrofolate and then the hydrolysis of 5,10-methenyltetrahydrofolate to 10-formyltetrahydrofolate. The protein is Bifunctional protein FolD of Dichelobacter nodosus (strain VCS1703A).